Reading from the N-terminus, the 1384-residue chain is ABC transporter C family member 2 (1384 aa).

The ABC transmembrane type-1 1 domain occupies 104–388 (NKISVATKIF…LPEAIHRALS (285 aa)). The next 5 helical transmembrane spans lie at 112-132 (IFVA…IYYI), 140-160 (TFKF…SLTL), 226-246 (IFVF…IVGL), 247-267 (SGLV…FLST), and 333-353 (MITQ…YALT). The 220-residue stretch at 505–724 (IEYDGAVQPS…GIDFESIMKT (220 aa)) folds into the ABC transporter 1 domain. 537–544 (GIVGSGKT) is a binding site for ATP. The tract at residues 729-756 (IDENDQSSTSTTDKKSSTSSSSSELKKS) is disordered. Positions 735–756 (SSTSTTDKKSSTSSSSSELKKS) are enriched in low complexity. 5 helical membrane-spanning segments follow: residues 813 to 833 (LFFL…LSDF), 852 to 872 (ILYY…RYFM), 941 to 961 (LFMM…LVVV), 1036 to 1056 (GIRL…SSLF), and 1061 to 1081 (GFSV…NWTI). One can recognise an ABC transmembrane type-1 2 domain in the interval 814 to 1093 (FFLTCALYFI…MTELEVKMNS (280 aa)). Residues 1137–1371 (VEFKNVEIKY…EGSRFKKLVK (235 aa)) enclose the ABC transporter 2 domain. 1171 to 1178 (GRTGAGKS) lines the ATP pocket.

This sequence belongs to the ABC transporter superfamily. ABCC family. Conjugate transporter (TC 3.A.1.208) subfamily.

It localises to the membrane. In Dictyostelium discoideum (Social amoeba), this protein is ABC transporter C family member 2 (abcC2).